Here is a 164-residue protein sequence, read N- to C-terminus: Protein-export protein SecB (164 aa).

The protein belongs to the SecB family. As to quaternary structure, homotetramer, a dimer of dimers. One homotetramer interacts with 1 SecA dimer.

The protein localises to the cytoplasm. In terms of biological role, one of the proteins required for the normal export of preproteins out of the cell cytoplasm. It is a molecular chaperone that binds to a subset of precursor proteins, maintaining them in a translocation-competent state. It also specifically binds to its receptor SecA. The protein is Protein-export protein SecB of Caulobacter sp. (strain K31).